A 271-amino-acid polypeptide reads, in one-letter code: Putative phosphoenolpyruvate synthase regulatory protein (271 aa).

151–158 (GVSRSGKT) is an ADP binding site.

It belongs to the pyruvate, phosphate/water dikinase regulatory protein family. PSRP subfamily.

It catalyses the reaction [pyruvate, water dikinase] + ADP = [pyruvate, water dikinase]-phosphate + AMP + H(+). The catalysed reaction is [pyruvate, water dikinase]-phosphate + phosphate + H(+) = [pyruvate, water dikinase] + diphosphate. Bifunctional serine/threonine kinase and phosphorylase involved in the regulation of the phosphoenolpyruvate synthase (PEPS) by catalyzing its phosphorylation/dephosphorylation. This chain is Putative phosphoenolpyruvate synthase regulatory protein, found in Burkholderia orbicola (strain MC0-3).